The sequence spans 179 residues: Probable RNA 2'-phosphotransferase (179 aa).

The protein belongs to the KptA/TPT1 family.

Removes the 2'-phosphate from RNA via an intermediate in which the phosphate is ADP-ribosylated by NAD followed by a presumed transesterification to release the RNA and generate ADP-ribose 1''-2''-cyclic phosphate (APPR&gt;P). May function as an ADP-ribosylase. The chain is Probable RNA 2'-phosphotransferase from Fusobacterium nucleatum subsp. nucleatum (strain ATCC 25586 / DSM 15643 / BCRC 10681 / CIP 101130 / JCM 8532 / KCTC 2640 / LMG 13131 / VPI 4355).